Reading from the N-terminus, the 479-residue chain is PTS system glucose-specific EIICB component (479 aa).

The PTS EIIC type-1 domain maps to 1–388; it reads MFKNAFSNLQ…FNLKTPGREK (388 aa). Transmembrane regions (helical) follow at residues 15–35, 51–71, 80–100, 112–132, 152–172, 252–272, 280–300, 305–325, and 356–376; these read SLMLPVSVLPIAGILLGIGSA, AGSSVFSNMPLIFAIGIALGF, LAAVVSYGIMTKTLSITIPIF, YLLDTGILGGIIAGSISAYIF, FVPIASGLISIIFGCILSIIW, GGFIFKMYGLPFAALAMWHCA, IGGIMMSGALTAILTGITEPI, ILVAPILYVIHAILAGLAFPI, and LFPIVGLFYGILYYGIFYFMI. One can recognise a PTS EIIB type-1 domain in the interval 399-479; sequence KETALLVISI…IDNYMSNTNQ (81 aa). Residue cysteine 421 is the Phosphocysteine intermediate; for EIIB activity of the active site. At cysteine 421 the chain carries Phosphocysteine.

It localises to the cell inner membrane. The catalysed reaction is N(pros)-phospho-L-histidyl-[protein] + D-glucose(out) = D-glucose 6-phosphate(in) + L-histidyl-[protein]. The phosphoenolpyruvate-dependent sugar phosphotransferase system (sugar PTS), a major carbohydrate active transport system, catalyzes the phosphorylation of incoming sugar substrates concomitantly with their translocation across the cell membrane. The enzyme II complex composed of PtsG and Crr is involved in glucose transport. In Buchnera aphidicola subsp. Baizongia pistaciae (strain Bp), this protein is PTS system glucose-specific EIICB component (ptsG).